Consider the following 391-residue polypeptide: Putative F-box protein At1g47730 (391 aa).

Over residues 1-12 (MEQREEKTENIQ) the composition is skewed to basic and acidic residues. The interval 1-25 (MEQREEKTENIQRKRSRGKSSSSSL) is disordered. In terms of domain architecture, F-box spans 19–68 (KSSSSSLPLDLTSEIFSRLPAKSVVRFRCVSKLWSSITTAPYFTNSFETR).

In Arabidopsis thaliana (Mouse-ear cress), this protein is Putative F-box protein At1g47730.